The chain runs to 355 residues: uncharacterized protein (355 aa).

Cys2 (for GATase activity) is an active-site residue. Residues 2–248 enclose the Glutamine amidotransferase type-2 domain; that stretch reads CELLGICFNK…NGELMVFKNG (247 aa).

This is an uncharacterized protein from Methanocaldococcus jannaschii (strain ATCC 43067 / DSM 2661 / JAL-1 / JCM 10045 / NBRC 100440) (Methanococcus jannaschii).